The following is a 560-amino-acid chain: Membrane protein insertase YidC (560 aa).

Helical transmembrane passes span 5–25 (IINL…WQYF), 334–354 (AIDF…MNFF), 357–377 (YVGN…LLMF), 431–451 (LPIL…YVTI), 476–496 (LFGL…WPIL), and 522–542 (FMPL…LIYW).

The protein belongs to the OXA1/ALB3/YidC family. Type 1 subfamily. Interacts with the Sec translocase complex via SecD. Specifically interacts with transmembrane segments of nascent integral membrane proteins during membrane integration.

It is found in the cell inner membrane. Required for the insertion and/or proper folding and/or complex formation of integral membrane proteins into the membrane. Involved in integration of membrane proteins that insert both dependently and independently of the Sec translocase complex, as well as at least some lipoproteins. Aids folding of multispanning membrane proteins. In Rickettsia africae (strain ESF-5), this protein is Membrane protein insertase YidC.